Here is a 492-residue protein sequence, read N- to C-terminus: Gamma-aminobutyric acid receptor subunit alpha-3 (492 aa).

The first 28 residues, 1–28 (MIITQMSQFYMAGLGLLFLINILPGTTG), serve as a signal peptide directing secretion. At 29-274 (QVESRRQEPG…MTTHFHLKRK (246 aa)) the chain is on the extracellular side. N63 carries an N-linked (GlcNAc...) asparagine glycan. R119 lines the 4-aminobutanoate pocket. 2 N-linked (GlcNAc...) asparagine glycosylation sites follow: N163 and N176. T182 is a binding site for 4-aminobutanoate. C191 and C205 are joined by a disulfide. An N-linked (GlcNAc...) asparagine glycan is attached at N228. Residues 275 to 295 (IGYFVIQTYLPCIMTVILSQV) traverse the membrane as a helical segment. Over 296–305 (SFWLNRESVP) the chain is Cytoplasmic. A helical membrane pass occupies residues 306–325 (ARTVFGVTTVLTMTTLSISA). Over 326 to 336 (RNSLPKVAYAT) the chain is Extracellular. The chain crosses the membrane as a helical span at residues 337 to 357 (AMDWFMAVCYAFVFSALIEFA). The Cytoplasmic portion of the chain corresponds to 358–457 (TVNYFTKRSW…TYNSVSKVDK (100 aa)). Phosphoserine is present on S426. T427 carries the phosphothreonine modification. At S433 the chain carries Phosphoserine. Residues 458 to 478 (ISRIIFPVLFAIFNLVYWATY) form a helical membrane-spanning segment. The Extracellular portion of the chain corresponds to 479–492 (VNRESAIKGMIRKQ).

This sequence belongs to the ligand-gated ion channel (TC 1.A.9) family. Gamma-aminobutyric acid receptor (TC 1.A.9.5) subfamily. GABRA3 sub-subfamily. Heteropentamer, formed by a combination of alpha (GABRA1-6), beta (GABRB1-3), gamma (GABRG1-3), delta (GABRD), epsilon (GABRE), rho (GABRR1-3), pi (GABRP) and theta (GABRQ) chains, each subunit exhibiting distinct physiological and pharmacological properties. Binds UBQLN1. Interacts with GPHN.

Its subcellular location is the postsynaptic cell membrane. It localises to the cell membrane. The catalysed reaction is chloride(in) = chloride(out). Functionally, alpha subunit of the heteropentameric ligand-gated chloride channel gated by gamma-aminobutyric acid (GABA), a major inhibitory neurotransmitter in the brain. GABA-gated chloride channels, also named GABA(A) receptors (GABAAR), consist of five subunits arranged around a central pore and contain GABA active binding site(s) located at the alpha and beta subunit interface(s). When activated by GABA, GABAARs selectively allow the flow of chloride anions across the cell membrane down their electrochemical gradient. Chloride influx into the postsynaptic neuron following GABAAR opening decreases the neuron ability to generate a new action potential, thereby reducing nerve transmission. This Bos taurus (Bovine) protein is Gamma-aminobutyric acid receptor subunit alpha-3 (GABRA3).